The following is an 811-amino-acid chain: Ribonucleoside-diphosphate reductase large chain (811 aa).

An ATP-cone domain is found at 1–92 (MFVYKRDGRQ…VSNLHKQTEK (92 aa)). ATP is bound by residues 5-6 (KR), 11-17 (EKVAFDK), Thr53, and Asp57. GDP is bound by residues Ser202 and Ser217. Cysteines 218 and 444 form a disulfide. DTTP contacts are provided by residues 226–228 (DSI), Lys243, Arg256, and 263–264 (AG). Asn427 provides a ligand contact to GDP. Asn427 acts as the Proton acceptor in catalysis. Cys429 acts as the Cysteine radical intermediate in catalysis. GDP is bound by residues Glu431 and 603-606 (TAST). The active-site Proton acceptor is the Glu431.

It belongs to the ribonucleoside diphosphate reductase large chain family. In terms of assembly, heterodimer of a large and a small subunit. Interacts with SPD1.

The catalysed reaction is a 2'-deoxyribonucleoside 5'-diphosphate + [thioredoxin]-disulfide + H2O = a ribonucleoside 5'-diphosphate + [thioredoxin]-dithiol. Its activity is regulated as follows. Under complex allosteric control mediated by deoxynucleoside triphosphates and ATP binding to separate specificity and activation sites on the large subunit. The type of nucleotide bound at the specificity site determines substrate preference. It seems probable that ATP makes the enzyme reduce CDP and UDP, dGTP favors ADP reduction and dTTP favors GDP reduction. Stimulated by ATP and inhibited by dATP binding to the activity site. Provides the precursors necessary for DNA synthesis. Catalyzes the biosynthesis of deoxyribonucleotides from the corresponding ribonucleotides. This Schizosaccharomyces pombe (strain 972 / ATCC 24843) (Fission yeast) protein is Ribonucleoside-diphosphate reductase large chain (cdc22).